The chain runs to 71 residues: Large ribosomal subunit protein bL31 (71 aa).

Zn(2+) is bound by residues cysteine 16, cysteine 18, cysteine 36, and cysteine 39.

The protein belongs to the bacterial ribosomal protein bL31 family. Type A subfamily. As to quaternary structure, part of the 50S ribosomal subunit. Zn(2+) serves as cofactor.

Functionally, binds the 23S rRNA. The polypeptide is Large ribosomal subunit protein bL31 (Thermotoga sp. (strain RQ2)).